A 348-amino-acid chain; its full sequence is Actin maturation protease (348 aa).

Residues 1–18 (MISPCSPPLEPPVPPPET) are compositionally biased toward pro residues. Residues 1-64 (MISPCSPPLE…LPPPPRTTGF (64 aa)) form a disordered region. Positions 34–48 (NLPELAFPPSSFQAS) are enriched in low complexity. The segment covering 49–60 (VPPPPPLPPPPR) has biased composition (pro residues). The segment at 121–241 (SLIQEGPQCG…WAVSAGVLLG (121 aa)) is peptidase C39-like. The active site involves Cys129. Ser313 carries the phosphoserine modification.

The protein belongs to the ACTMAP family. Interacts (via N-terminus) with PFN2; the interaction may facilitate efficient cleavage of the acetylated N-terminus of immature actin. Interacts with PFN1.

It is found in the cytoplasm. It catalyses the reaction N-terminal N(alpha)-acetyl-L-methionyl-L-aspartyl-[protein] + H2O = N-terminal L-aspartyl-[protein] + N-acetyl-L-methionine. It carries out the reaction N-terminal N(alpha)-acetyl-L-methionyl-L-glutamyl-[protein] + H2O = N-terminal L-glutamyl-[protein] + N-acetyl-L-methionine. The catalysed reaction is N-terminal N(alpha)-acetyl-L-cysteinyl-L-aspartyl-[protein] + H2O = N-terminal L-aspartyl-[protein] + N-acetyl-L-cysteine. The enzyme catalyses N-terminal N(alpha)-acetyl-L-cysteinyl-L-glutamyl-[protein] + H2O = N-terminal L-glutamyl-[protein] + N-acetyl-L-cysteine. Functionally, actin maturation protease that specifically mediates the cleavage of immature acetylated N-terminal actin, thereby contributing to actin maturation. Cleaves N-terminal acetylated methionine of immature cytoplasmic beta- and gamma-actins ACTB and ACTG1 after translation. Cleaves N-terminal acetylated cysteine of muscle alpha-actins ACTA1, ACTC1 and ACTA2 after canonical removal of N-terminal methionine. The chain is Actin maturation protease from Bos taurus (Bovine).